Here is a 201-residue protein sequence, read N- to C-terminus: Peptidyl-tRNA hydrolase (201 aa).

Tyr17 lines the tRNA pocket. Residue His22 is the Proton acceptor of the active site. TRNA-binding residues include Phe76, Asn78, and Asn124.

Belongs to the PTH family. As to quaternary structure, monomer.

The protein localises to the cytoplasm. It catalyses the reaction an N-acyl-L-alpha-aminoacyl-tRNA + H2O = an N-acyl-L-amino acid + a tRNA + H(+). Its function is as follows. Hydrolyzes ribosome-free peptidyl-tRNAs (with 1 or more amino acids incorporated), which drop off the ribosome during protein synthesis, or as a result of ribosome stalling. Functionally, catalyzes the release of premature peptidyl moieties from peptidyl-tRNA molecules trapped in stalled 50S ribosomal subunits, and thus maintains levels of free tRNAs and 50S ribosomes. This Oleidesulfovibrio alaskensis (strain ATCC BAA-1058 / DSM 17464 / G20) (Desulfovibrio alaskensis) protein is Peptidyl-tRNA hydrolase.